A 638-amino-acid chain; its full sequence is Chaperone protein DnaK (638 aa).

At threonine 198 the chain carries Phosphothreonine; by autocatalysis. The tract at residues lysine 600–lysine 638 is disordered. A compositionally biased stretch (acidic residues) spans alanine 628–lysine 638.

Belongs to the heat shock protein 70 family.

Its function is as follows. Acts as a chaperone. This chain is Chaperone protein DnaK, found in Geobacter metallireducens (strain ATCC 53774 / DSM 7210 / GS-15).